Here is a 340-residue protein sequence, read N- to C-terminus: NADH-quinone oxidoreductase subunit H (340 aa).

8 helical membrane passes run 4 to 24, 78 to 98, 113 to 133, 151 to 171, 184 to 204, 244 to 264, 273 to 293, and 316 to 336; these read TIGILIWIIIKILVIVVPLLL, YLFVIAPLFALVPSLVGWAVI, VLYLFAMSSLGVYGVLIAGWA, VSYEIAMGFALVGVLLAAGSM, MLHWWFIPLLPLFLVFWIAGI, SMILISTFMAILFMGGWLSPF, IFFVVPGFVWLLLKISFFLFV, and VLIPVTIVWLVVTSLMVVAHV.

It belongs to the complex I subunit 1 family. As to quaternary structure, NDH-1 is composed of 14 different subunits. Subunits NuoA, H, J, K, L, M, N constitute the membrane sector of the complex.

It localises to the cell inner membrane. The enzyme catalyses a quinone + NADH + 5 H(+)(in) = a quinol + NAD(+) + 4 H(+)(out). Its function is as follows. NDH-1 shuttles electrons from NADH, via FMN and iron-sulfur (Fe-S) centers, to quinones in the respiratory chain. The immediate electron acceptor for the enzyme in this species is believed to be ubiquinone. Couples the redox reaction to proton translocation (for every two electrons transferred, four hydrogen ions are translocated across the cytoplasmic membrane), and thus conserves the redox energy in a proton gradient. This subunit may bind ubiquinone. The polypeptide is NADH-quinone oxidoreductase subunit H (Legionella pneumophila (strain Paris)).